The primary structure comprises 366 residues: Flagellar P-ring protein (366 aa).

The signal sequence occupies residues 1-19 (MTLIRLLACLLFLPCLAQA).

The protein belongs to the FlgI family. In terms of assembly, the basal body constitutes a major portion of the flagellar organelle and consists of four rings (L,P,S, and M) mounted on a central rod.

It is found in the periplasm. Its subcellular location is the bacterial flagellum basal body. In terms of biological role, assembles around the rod to form the L-ring and probably protects the motor/basal body from shearing forces during rotation. In Ruegeria pomeroyi (strain ATCC 700808 / DSM 15171 / DSS-3) (Silicibacter pomeroyi), this protein is Flagellar P-ring protein.